Reading from the N-terminus, the 191-residue chain is MIRISDAAQAHFAKLLANQEEGTQIRVFVINPGAPNAECGVSYCPPDAVEATDTALKFDLLTAYVDELSAPYLEDAEIDFVTDQLGSQLTLKAPNAKMRKVADDAPLMERVEYALQSQINPQLAGHGGRVSLMEITDEGYAILQFGGGCNGCSMVDVTLKEGIEKQLLNEFPELKGVRDLTEHQRGEHSYY.

2 residues coordinate [4Fe-4S] cluster: Cys-149 and Cys-152.

The protein belongs to the NfuA family. Homodimer. [4Fe-4S] cluster is required as a cofactor.

In terms of biological role, involved in iron-sulfur cluster biogenesis. Binds a 4Fe-4S cluster, can transfer this cluster to apoproteins, and thereby intervenes in the maturation of Fe/S proteins. Could also act as a scaffold/chaperone for damaged Fe/S proteins. This chain is Fe/S biogenesis protein NfuA, found in Salmonella paratyphi A (strain ATCC 9150 / SARB42).